A 290-amino-acid polypeptide reads, in one-letter code: Shikimate kinase (290 aa).

81-91 (PIASGLKSSSA) serves as a coordination point for ATP.

The protein belongs to the GHMP kinase family. Archaeal shikimate kinase subfamily.

It is found in the cytoplasm. It carries out the reaction shikimate + ATP = 3-phosphoshikimate + ADP + H(+). It functions in the pathway metabolic intermediate biosynthesis; chorismate biosynthesis; chorismate from D-erythrose 4-phosphate and phosphoenolpyruvate: step 5/7. The sequence is that of Shikimate kinase from Methanocella arvoryzae (strain DSM 22066 / NBRC 105507 / MRE50).